Reading from the N-terminus, the 244-residue chain is Ribonuclease PH (244 aa).

Residues R86 and 124-126 (GTR) contribute to the phosphate site.

It belongs to the RNase PH family. In terms of assembly, homohexameric ring arranged as a trimer of dimers.

The enzyme catalyses tRNA(n+1) + phosphate = tRNA(n) + a ribonucleoside 5'-diphosphate. Phosphorolytic 3'-5' exoribonuclease that plays an important role in tRNA 3'-end maturation. Removes nucleotide residues following the 3'-CCA terminus of tRNAs; can also add nucleotides to the ends of RNA molecules by using nucleoside diphosphates as substrates, but this may not be physiologically important. Probably plays a role in initiation of 16S rRNA degradation (leading to ribosome degradation) during starvation. This Glaesserella parasuis serovar 5 (strain SH0165) (Haemophilus parasuis) protein is Ribonuclease PH.